The sequence spans 585 residues: MVSFKVSLVSTSPIDGQKPGTSGLRKKVKVFKQPNYLENFVQATFNALTTEKVKGATLVVSGDGRYYSEQAIQIIVKMAAANGVRRVWVGQNSLLSTPAVSAIIRERVGADGSKATGAFILTASHNPGGPTEDFGIKYNMENGGPAPESITDKIYENTKTIKEYPIAEDLPRVDISTIGITSFEGPEGKFDVEVFDSADDYVKLMKSIFDFESIKKLLSYPKFTFCYDALHGVAGAYAHRIFVEELGAPESSLLNCVPKEDFGGGHPDPNLTYAKELVARMGLSKTDDAGGEPPEFGAAADGDADRNMILGKRFFVTPSDSVAIIAANAVGAIPYFSSGLKGVARSMPTSAALDVVAKNLGLKFFEVPTGWKFFGNLMDAGMCSVCGEESFGTGSDHIREKDGIWAVLAWLSILAHKNKETLDGNAKLVTVEDIVRQHWATYGRHYYTRYDYENVDATAAKELMGLLVKLQSSLPEVNKIIKGIHPEVANVASADEFEYKDPVDGSVSKHQGIRYLFEDGSRLVFRLSGTGSEGATIRLYIEQYEKDASKIGRDSQDALGPLVDVALKLSKMQEFTGRSSPTVIT.

The disordered stretch occupies residues 1–20 (MVSFKVSLVSTSPIDGQKPG). Arg25 and Ser124 together coordinate alpha-D-glucose 1,6-bisphosphate. The active-site Phosphoserine intermediate is Ser124. Mg(2+) is bound by residues Ser124, Asp301, Asp303, and Asp305. A Phosphoserine modification is found at Ser124. Alpha-D-glucose 1,6-bisphosphate-binding residues include Asp305, Arg306, Thr369, Glu388, Ser390, and Lys401.

It belongs to the phosphohexose mutase family. As to quaternary structure, monomer. Mg(2+) serves as cofactor.

It localises to the cytoplasm. It carries out the reaction alpha-D-glucose 1-phosphate = alpha-D-glucose 6-phosphate. It catalyses the reaction O-phospho-L-seryl-[protein] + alpha-D-glucose 1-phosphate = alpha-D-glucose 1,6-bisphosphate + L-seryl-[protein]. The enzyme catalyses alpha-D-glucose 1,6-bisphosphate + L-seryl-[protein] = O-phospho-L-seryl-[protein] + alpha-D-glucose 6-phosphate. Catalyzes the reversible isomerization of alpha-D-glucose 1-phosphate to alpha-D-glucose 6-phosphate. The mechanism proceeds via the intermediate compound alpha-D-glucose 1,6-bisphosphate. This enzyme participates in both the breakdown and synthesis of glucose. This is Probable phosphoglucomutase, cytoplasmic 2 from Arabidopsis thaliana (Mouse-ear cress).